Consider the following 404-residue polypeptide: Propionate kinase (404 aa).

This sequence belongs to the acetokinase family. PduW subfamily.

It localises to the cytoplasm. It catalyses the reaction propanoate + ATP = propanoyl phosphate + ADP. Its pathway is polyol metabolism; 1,2-propanediol degradation. Its function is as follows. Works with phosphate acetyltransferase (pta) to capture exogenous propionate and regenerate propionyl-CoA during degradation of 1,2-propanediol (1,2-PD). The chain is Propionate kinase from Klebsiella pneumoniae subsp. pneumoniae (strain ATCC 700721 / MGH 78578).